Here is a 260-residue protein sequence, read N- to C-terminus: 5'-nucleotidase SurE (260 aa).

The a divalent metal cation site is built by Asp-8, Asp-9, Ser-39, and Asn-93.

Belongs to the SurE nucleotidase family. Requires a divalent metal cation as cofactor.

The protein resides in the cytoplasm. The enzyme catalyses a ribonucleoside 5'-phosphate + H2O = a ribonucleoside + phosphate. In terms of biological role, nucleotidase that shows phosphatase activity on nucleoside 5'-monophosphates. This chain is 5'-nucleotidase SurE, found in Thermofilum pendens (strain DSM 2475 / Hrk 5).